The chain runs to 312 residues: Pantothenate kinase (312 aa).

97–104 provides a ligand contact to ATP; it reads GSVAVGKS.

It belongs to the prokaryotic pantothenate kinase family.

It is found in the cytoplasm. The catalysed reaction is (R)-pantothenate + ATP = (R)-4'-phosphopantothenate + ADP + H(+). It functions in the pathway cofactor biosynthesis; coenzyme A biosynthesis; CoA from (R)-pantothenate: step 1/5. This Mycolicibacterium gilvum (strain PYR-GCK) (Mycobacterium gilvum (strain PYR-GCK)) protein is Pantothenate kinase.